The sequence spans 209 residues: Ribonuclease HII (209 aa).

The region spanning 7 to 198 (GPVAGVDEAG…VAKAHQEWLH (192 aa)) is the RNase H type-2 domain. The a divalent metal cation site is built by D13, E14, and D107.

Belongs to the RNase HII family. It depends on Mn(2+) as a cofactor. Requires Mg(2+) as cofactor.

The protein resides in the cytoplasm. The catalysed reaction is Endonucleolytic cleavage to 5'-phosphomonoester.. In terms of biological role, endonuclease that specifically degrades the RNA of RNA-DNA hybrids. The polypeptide is Ribonuclease HII (Corynebacterium glutamicum (strain R)).